The sequence spans 184 residues: ADP-ribosylation factor-like protein 2 (184 aa).

Gly-2 carries N-myristoyl glycine lipidation. 23-30 provides a ligand contact to GTP; that stretch reads GLDNAGKT. At Ser-45 the chain carries Phosphoserine. Residues 66-70 and Gly-68 contribute to the GTP site; that span reads DVGGQ. Lys-71 is covalently cross-linked (Glycyl lysine isopeptide (Lys-Gly) (interchain with G-Cter in ubiquitin)). GTP is bound at residue 125–128; sequence NKQD.

This sequence belongs to the small GTPase superfamily. Arf family. In terms of assembly, found in a complex with ARL2, ARL2BP and SLC25A6. Found in a complex with at least ARL2, PPP2CB, PPP2R1A, PPP2R2A, PPP2R5E and TBCD. Interacts with ELMOD2. The GTP-bound form interacts with ARL2BP. The GDP-bound form interacts preferentially with TBCD. Interacts with UNC119. Found in a complex with ARL2, ARL2BP and SLC25A4. The GTP-bound form interacts with PDE6D. In terms of processing, not N-myristoylated. In terms of tissue distribution, expressed in brain, retina, lung, cerebellum, liver, kidney, hippocampus, spleen, cortex and heart (at protein level).

It localises to the mitochondrion intermembrane space. The protein localises to the cytoplasm. The protein resides in the cytoskeleton. It is found in the microtubule organizing center. Its subcellular location is the centrosome. It localises to the nucleus. Its function is as follows. Small GTP-binding protein which cycles between an inactive GDP-bound and an active GTP-bound form, and the rate of cycling is regulated by guanine nucleotide exchange factors (GEF) and GTPase-activating proteins (GAP). GTP-binding protein that does not act as an allosteric activator of the cholera toxin catalytic subunit. Regulates formation of new microtubules and centrosome integrity. Prevents the TBCD-induced microtubule destruction. Participates in association with TBCD, in the disassembly of the apical junction complexes. Antagonizes the effect of TBCD on epithelial cell detachment and tight and adherens junctions disassembly. Together with ARL2, plays a role in the nuclear translocation, retention and transcriptional activity of STAT3. Component of a regulated secretory pathway involved in Ca(2+)-dependent release of acetylcholine. Required for normal progress through the cell cycle. The protein is ADP-ribosylation factor-like protein 2 (Arl2) of Rattus norvegicus (Rat).